We begin with the raw amino-acid sequence, 375 residues long: Queuine tRNA-ribosyltransferase (375 aa).

The active-site Proton acceptor is Asp-94. Substrate-binding positions include 94 to 98, Asp-148, Gln-191, and Gly-218; that span reads DSGGF. The RNA binding stretch occupies residues 249-255; it reads GVGSPDD. The active-site Nucleophile is Asp-268. The RNA binding; important for wobble base 34 recognition stretch occupies residues 273 to 277; it reads TRIAR. Zn(2+)-binding residues include Cys-306, Cys-308, Cys-311, and His-337.

Belongs to the queuine tRNA-ribosyltransferase family. In terms of assembly, homodimer. Within each dimer, one monomer is responsible for RNA recognition and catalysis, while the other monomer binds to the replacement base PreQ1. Zn(2+) serves as cofactor.

The enzyme catalyses 7-aminomethyl-7-carbaguanine + guanosine(34) in tRNA = 7-aminomethyl-7-carbaguanosine(34) in tRNA + guanine. The protein operates within tRNA modification; tRNA-queuosine biosynthesis. In terms of biological role, catalyzes the base-exchange of a guanine (G) residue with the queuine precursor 7-aminomethyl-7-deazaguanine (PreQ1) at position 34 (anticodon wobble position) in tRNAs with GU(N) anticodons (tRNA-Asp, -Asn, -His and -Tyr). Catalysis occurs through a double-displacement mechanism. The nucleophile active site attacks the C1' of nucleotide 34 to detach the guanine base from the RNA, forming a covalent enzyme-RNA intermediate. The proton acceptor active site deprotonates the incoming PreQ1, allowing a nucleophilic attack on the C1' of the ribose to form the product. After dissociation, two additional enzymatic reactions on the tRNA convert PreQ1 to queuine (Q), resulting in the hypermodified nucleoside queuosine (7-(((4,5-cis-dihydroxy-2-cyclopenten-1-yl)amino)methyl)-7-deazaguanosine). The chain is Queuine tRNA-ribosyltransferase from Thermoanaerobacter pseudethanolicus (strain ATCC 33223 / 39E) (Clostridium thermohydrosulfuricum).